The primary structure comprises 149 residues: MSKTLSFKTYSAKPGDVERKWYVVDAEGQILGRMAAEIAKVLRGKHKPEFTPHIDTGDFIVVTNAEKVALSGKKLDAKAYFSHSQYPGGVKFNHVKDLLRKKPEKVIEHAVWGMLPHNNLGRQLFKKLKVYPGATHPHESQSPIEMKVN.

It belongs to the universal ribosomal protein uL13 family. As to quaternary structure, part of the 50S ribosomal subunit.

Functionally, this protein is one of the early assembly proteins of the 50S ribosomal subunit, although it is not seen to bind rRNA by itself. It is important during the early stages of 50S assembly. This is Large ribosomal subunit protein uL13 from Chlorobium phaeovibrioides (strain DSM 265 / 1930) (Prosthecochloris vibrioformis (strain DSM 265)).